The chain runs to 227 residues: ATP synthase F(0) complex subunit a (227 aa).

Transmembrane regions (helical) follow at residues 12–32 (PCLLGIPLILPSLLLPALLLP), 69–89 (WALLLTSLILMLLSINLLGLL), 98–118 (QLSMNMALALPLWLATLLTGL), 139–159 (IPALIMIETTSLLIRPLALGV), 170–190 (LLIQLISTATIALLPMMPSIS), and 196–216 (ILFLLTILEVAVAMIQAYVFV).

Belongs to the ATPase A chain family. As to quaternary structure, component of the ATP synthase complex composed at least of ATP5F1A/subunit alpha, ATP5F1B/subunit beta, ATP5MC1/subunit c (homooctomer), MT-ATP6/subunit a, MT-ATP8/subunit 8, ATP5ME/subunit e, ATP5MF/subunit f, ATP5MG/subunit g, ATP5MK/subunit k, ATP5MJ/subunit j, ATP5F1C/subunit gamma, ATP5F1D/subunit delta, ATP5F1E/subunit epsilon, ATP5PF/subunit F6, ATP5PB/subunit b, ATP5PD/subunit d, ATP5PO/subunit OSCP. ATP synthase complex consists of a soluble F(1) head domain (subunits alpha(3) and beta(3)) - the catalytic core - and a membrane F(0) domain - the membrane proton channel (subunits c, a, 8, e, f, g, k and j). These two domains are linked by a central stalk (subunits gamma, delta, and epsilon) rotating inside the F1 region and a stationary peripheral stalk (subunits F6, b, d, and OSCP). Interacts with DNAJC30; interaction is direct.

It is found in the mitochondrion inner membrane. It carries out the reaction H(+)(in) = H(+)(out). Subunit a, of the mitochondrial membrane ATP synthase complex (F(1)F(0) ATP synthase or Complex V) that produces ATP from ADP in the presence of a proton gradient across the membrane which is generated by electron transport complexes of the respiratory chain. ATP synthase complex consist of a soluble F(1) head domain - the catalytic core - and a membrane F(1) domain - the membrane proton channel. These two domains are linked by a central stalk rotating inside the F(1) region and a stationary peripheral stalk. During catalysis, ATP synthesis in the catalytic domain of F(1) is coupled via a rotary mechanism of the central stalk subunits to proton translocation. With the subunit c (ATP5MC1), forms the proton-conducting channel in the F(0) domain, that contains two crucial half-channels (inlet and outlet) that facilitate proton movement from the mitochondrial intermembrane space (IMS) into the matrix. Protons are taken up via the inlet half-channel and released through the outlet half-channel, following a Grotthuss mechanism. This is ATP synthase F(0) complex subunit a from Gallus gallus (Chicken).